The primary structure comprises 221 residues: MDRFVSIAGDPHIGVFTRVFDDIAVVPPDVPEEVTTRYEEALKVEIVRTTIQRSPIIGSLLVGNNNGLVITGMATEEEIATLSEYRDLMLLEEGMNAAGNIILANDHFAAVHPEMDEEFMDALSDFLKVPVIPLTLGDVKTVGMAAVATNSGVVVSPRTTPGEIQRLEQVCSLPVGKGTVTMGNAMVGTGLVANRYGYLAGVGTSGYELGRIEDILGFEEE.

The protein belongs to the eIF-6 family.

Its function is as follows. Binds to the 50S ribosomal subunit and prevents its association with the 30S ribosomal subunit to form the 70S initiation complex. The chain is Translation initiation factor 6 from Methanospirillum hungatei JF-1 (strain ATCC 27890 / DSM 864 / NBRC 100397 / JF-1).